The sequence spans 338 residues: uncharacterized protein (338 aa).

This is an uncharacterized protein from Schizosaccharomyces pombe (strain 972 / ATCC 24843) (Fission yeast).